A 543-amino-acid chain; its full sequence is MPPPLQAHRLLISHRRLPTPARRRFTAASSVQSAPATTLAPGPATSSILSIRESLLSGERTAADITSEYLSRLRRTEPTLRSFIHVADAAAEREAEELDRRIASGEKDAVGPLAGVLVGVKDNLCTANMPSTGGSRILDGYRPAYDATAVRRLREAGAIVLGKTNLDEFGMGSTTEGSAFQVTTNPWDDSRVPGGSSGGSAAAVSARQCVVSLGSDTGGSVRQPASFCGVVGLKPTYGRVSRFGLMAYASSLDVVGCFGSSVFDTATILSVVAGHDKMDATSSSQVVPEYASELVSLDLLESKPLNGVRIGIIQETLGEGVASGVVSSIKGAASHLEQLGSVVEEVSLPSFSLGLPAYYILASSEASSNLSRYDGIRYGGQVSADDLNELYGESRANGFGHEVKMRILMGTYALSAGYYDAYYKRAQQVRTLVKQSFKDALERYDILISPAAPSAAYKIGEKINDPLAMYAGDIMTVNVNLAGLPALVVPCGFVEGGAAGLPVGLQMMGSPFCEGNLLRVGHIFEQTLQNLSFVPPLLAEGQL.

Active-site charge relay system residues include lysine 121 and serine 196. Serine 220 functions as the Acyl-ester intermediate in the catalytic mechanism.

This sequence belongs to the amidase family. GatA subfamily. As to quaternary structure, subunit of the heterotrimeric GatCAB amidotransferase (AdT) complex, composed of A, B and C subunits.

The protein resides in the mitochondrion. Its subcellular location is the plastid. It localises to the chloroplast stroma. It catalyses the reaction L-glutamyl-tRNA(Gln) + L-glutamine + ATP + H2O = L-glutaminyl-tRNA(Gln) + L-glutamate + ADP + phosphate + H(+). Its function is as follows. Allows the formation of correctly charged Gln-tRNA(Gln) through the transamidation of misacylated Glu-tRNA(Gln) in chloroplasts and mitochondria. The reaction takes place in the presence of glutamine and ATP through an activated gamma-phospho-Glu-tRNA(Gln). The sequence is that of Glutamyl-tRNA(Gln) amidotransferase subunit A, chloroplastic/mitochondrial from Zea mays (Maize).